A 631-amino-acid chain; its full sequence is MAPPGSSTVFLLALTIIASTWALTPTHYLTKHDVERLKASLDRPFTNLESAFYSIVGLSSLGAQVPDAKKACTYIRSNLDPSNVDSLFYAAQASQALSGCEISISNETKDLLLAAVSEDSSVTQIYHAVAALSGFGLPLASQEALSALTARLSKEETVLATVQALQTASHLSQQADLRSIVEEIEDLVARLDELGGVYLQFEEGLETTALFVAATYKLMDHVGTEPSIKEDQVIQLMNAIFSKKNFESLSEAFSVASAAAVLSHNRYHVPVVVVPEGSASDTHEQAILRLQVTNVLSQPLTQATVKLEHAKSVASRATVLQKTSFTPVGDVFELNFMNVKFSSGYYDFLVEVEGDNRYIANTVELRVKISTEVGITNVDLSTVDKDQSIAPKTTRVTYPAKAKGTFIADSHQNFALFFQLVDVNTGAELTPHQTFVRLHNQKTGQEVVFVAEPDNKNVYKFELDTSERKIEFDSASGTYTLYLIIGDATLKNPILWNVADVVIKFPEEEAPSTVLSQNLFTPKQEIQHLFREPEKRPPTVVSNTFTALILSPLLLLFALWIRIGANVSNFTFAPSTIIFHLGHAAMLGLMYVYWTQLNMFQTLKYLAILGSVTFLAGNRMLAQQAVKRTAH.

Positions 1–22 are cleaved as a signal peptide; the sequence is MAPPGSSTVFLLALTIIASTWA. At 23–540 the chain is on the lumenal side; that stretch reads LTPTHYLTKH…REPEKRPPTV (518 aa). Asn-106 is a glycosylation site (N-linked (GlcNAc...) asparagine). Residue Lys-154 forms a Glycyl lysine isopeptide (Lys-Gly) (interchain with G-Cter in ubiquitin) linkage. The chain crosses the membrane as a helical span at residues 541–561; that stretch reads VSNTFTALILSPLLLLFALWI. Residues 562–571 are Cytoplasmic-facing; that stretch reads RIGANVSNFT. A helical membrane pass occupies residues 572 to 592; the sequence is FAPSTIIFHLGHAAMLGLMYV. Topologically, residues 593-596 are lumenal; it reads YWTQ. Residues 597-617 traverse the membrane as a helical segment; the sequence is LNMFQTLKYLAILGSVTFLAG. The Cytoplasmic segment spans residues 618 to 631; that stretch reads NRMLAQQAVKRTAH.

This sequence belongs to the SWP1 family. As to quaternary structure, component of the oligosaccharyltransferase (OST) complex. OST exists in two different complex forms which contain common core subunits RPN1, RPN2, OST48, OST4, DAD1 and TMEM258, either STT3A or STT3B as catalytic subunits, and form-specific accessory subunits. STT3A complex assembly occurs through the formation of 3 subcomplexes. Subcomplex 1 contains RPN1 and TMEM258, subcomplex 2 contains the STT3A-specific subunits STT3A, DC2/OSTC, and KCP2 as well as the core subunit OST4, and subcomplex 3 contains RPN2, DAD1, and OST48. The STT3A complex can form stable complexes with the Sec61 complex or with both the Sec61 and TRAP complexes. Interacts with DDI2. Interacts with TMEM35A/NACHO. In terms of tissue distribution, expressed in all tissues tested.

The protein resides in the endoplasmic reticulum. Its subcellular location is the endoplasmic reticulum membrane. It participates in protein modification; protein glycosylation. In terms of biological role, subunit of the oligosaccharyl transferase (OST) complex that catalyzes the initial transfer of a defined glycan (Glc(3)Man(9)GlcNAc(2) in eukaryotes) from the lipid carrier dolichol-pyrophosphate to an asparagine residue within an Asn-X-Ser/Thr consensus motif in nascent polypeptide chains, the first step in protein N-glycosylation. N-glycosylation occurs cotranslationally and the complex associates with the Sec61 complex at the channel-forming translocon complex that mediates protein translocation across the endoplasmic reticulum (ER). All subunits are required for a maximal enzyme activity. This Homo sapiens (Human) protein is Dolichyl-diphosphooligosaccharide--protein glycosyltransferase subunit 2.